A 241-amino-acid polypeptide reads, in one-letter code: Trypsin-10 (241 aa).

The signal sequence occupies residues 1 to 13 (MKSLIFVLLLGAV). A propeptide spans 14–19 (FAEEDK) (activation peptide). The 220-residue stretch at 20–239 (IVGGYECTRH…LSGWVRDTMA (220 aa)) folds into the Peptidase S1 domain. 6 disulfide bridges follow: cysteine 26/cysteine 155, cysteine 44/cysteine 60, cysteine 128/cysteine 228, cysteine 135/cysteine 201, cysteine 166/cysteine 180, and cysteine 191/cysteine 215. Active-site charge relay system residues include histidine 59 and aspartate 103. Serine 195 (charge relay system) is an active-site residue.

This sequence belongs to the peptidase S1 family.

It localises to the secreted. The protein resides in the extracellular space. It catalyses the reaction Preferential cleavage: Arg-|-Xaa, Lys-|-Xaa.. This Gadus morhua (Atlantic cod) protein is Trypsin-10.